Consider the following 486-residue polypeptide: Glycogen synthase (486 aa).

Residue Lys-20 participates in ADP-alpha-D-glucose binding.

It belongs to the glycosyltransferase 1 family. Bacterial/plant glycogen synthase subfamily.

It catalyses the reaction [(1-&gt;4)-alpha-D-glucosyl](n) + ADP-alpha-D-glucose = [(1-&gt;4)-alpha-D-glucosyl](n+1) + ADP + H(+). The protein operates within glycan biosynthesis; glycogen biosynthesis. In terms of biological role, synthesizes alpha-1,4-glucan chains using ADP-glucose. This Aeromonas hydrophila subsp. hydrophila (strain ATCC 7966 / DSM 30187 / BCRC 13018 / CCUG 14551 / JCM 1027 / KCTC 2358 / NCIMB 9240 / NCTC 8049) protein is Glycogen synthase.